The following is an 88-amino-acid chain: Conotoxin MaIr34 (88 aa).

The signal sequence occupies residues 1–21 (MKLTCVIVAVLFLTAWTFVMA). Positions 22–53 (DDPRDGPDTAVRGGKRFWKARNEMNSAASKLN) are excised as a propeptide. Cystine bridges form between cysteine 57/cysteine 75, cysteine 64/cysteine 79, and cysteine 74/cysteine 83.

This sequence belongs to the conotoxin O1 superfamily. In terms of tissue distribution, expressed by the venom duct.

It is found in the secreted. This is Conotoxin MaIr34 from Conus marmoreus (Marble cone).